Reading from the N-terminus, the 692-residue chain is Follicle-stimulating hormone receptor (692 aa).

The signal sequence occupies residues 1–17 (MALLLVSLLAFLGSGSG). Cystine bridges form between Cys18–Cys25 and Cys23–Cys32. An LRRNT domain is found at 18-46 (CHHWLCHCSNRVFLCQDSKVTEIPPDLPR). Topologically, residues 18 to 365 (CHHWLCHCSN…EDIMGYNILR (348 aa)) are extracellular. LRR repeat units follow at residues 49–72 (IELR…FGDL), 73–97 (EKIE…LPNL), 98–118 (HEIR…AFQN), 119–143 (LPSL…KIQS), 144–169 (LQKV…MGLS), 170–192 (FESV…AFNG), 193–216 (TQLD…VFQG), 217–240 (ASGP…GLEN), and 241–259 (LKKL…PSLD). Residues Asn191 and Asn199 are each glycosylated (N-linked (GlcNAc...) asparagine). 4 disulfide bridges follow: Cys275-Cys345, Cys276-Cys292, Cys276-Cys355, and Cys292-Cys337. Asn293 carries an N-linked (GlcNAc...) asparagine glycan. Residue Tyr334 is modified to Sulfotyrosine. The helical transmembrane segment at 366–386 (VLIWFISILAITGNTTVLVVL) threads the bilayer. Topologically, residues 387–397 (TTSQYKLTVPR) are cytoplasmic. A helical transmembrane segment spans residues 398 to 420 (FLMCNLAFADLCIGIYLLLIASV). Topologically, residues 421-442 (DIHTKSQYHNYAIDWQTGAGCD) are extracellular. A disulfide bridge links Cys441 with Cys516. Residues 443–464 (AAGFFTVFASELSVYTLAAITL) form a helical membrane-spanning segment. The Cytoplasmic portion of the chain corresponds to 465-484 (ERWHTITHAMQLECKVQLCH). The helical transmembrane segment at 485-507 (AASIMVLGWAFAFAAALFPIFGI) threads the bilayer. At 508-527 (SSYMKVSICLPMDIDSPLSQ) the chain is on the extracellular side. Residues 528–549 (LYVMALLVLNALAFVVICGCYT) traverse the membrane as a helical segment. Residues 550–572 (HIYLTVRNPNIVSSSRDTKIAKR) are Cytoplasmic-facing. The helical transmembrane segment at 573-596 (MATLIFTDFLCMAPILFFAISASL) threads the bilayer. At 597-607 (KVPLITVSKAK) the chain is on the extracellular side. The chain crosses the membrane as a helical span at residues 608-629 (ILLVLFYPINSCANPFLYAIFT). Over 630-692 (KNFRRDFFVL…LVPLNHSVQN (63 aa)) the chain is Cytoplasmic.

Belongs to the G-protein coupled receptor 1 family. FSH/LSH/TSH subfamily. Homotrimer. Functions as a homotrimer binding the FSH hormone heterodimer composed of CGA and FSHB. Interacts with ARRB2. Interacts with APPL2; interaction is independent of follicle stimulating hormone stimulation. In terms of processing, N-glycosylated; indirectly required for FSH-binding, possibly via a conformational change that allows high affinity binding of hormone. Sulfated.

It is found in the cell membrane. In terms of biological role, g protein-coupled receptor for follitropin, the follicle-stimulating hormone. Through cAMP production activates the downstream PI3K-AKT and ERK1/ERK2 signaling pathways. The polypeptide is Follicle-stimulating hormone receptor (Fshr) (Mus musculus (Mouse)).